We begin with the raw amino-acid sequence, 175 residues long: Ribosome maturation factor RimM (175 aa).

The PRC barrel domain occupies 98 to 175 (EGEYYWHQLE…EMRVDWDADF (78 aa)).

The protein belongs to the RimM family. In terms of assembly, binds ribosomal protein uS19.

The protein resides in the cytoplasm. Its function is as follows. An accessory protein needed during the final step in the assembly of 30S ribosomal subunit, possibly for assembly of the head region. Essential for efficient processing of 16S rRNA. May be needed both before and after RbfA during the maturation of 16S rRNA. It has affinity for free ribosomal 30S subunits but not for 70S ribosomes. This is Ribosome maturation factor RimM from Pseudomonas aeruginosa (strain ATCC 15692 / DSM 22644 / CIP 104116 / JCM 14847 / LMG 12228 / 1C / PRS 101 / PAO1).